Reading from the N-terminus, the 78-residue chain is Defensin-like protein 281 (78 aa).

The N-terminal stretch at 1-23 is a signal peptide; sequence MASTKYLVLLFICLSVLLTPGLG. Cystine bridges form between cysteine 37/cysteine 60, cysteine 46/cysteine 72, and cysteine 50/cysteine 74.

Belongs to the DEFL family.

It localises to the secreted. The chain is Defensin-like protein 281 from Arabidopsis thaliana (Mouse-ear cress).